Here is a 570-residue protein sequence, read N- to C-terminus: 2-succinyl-5-enolpyruvyl-6-hydroxy-3-cyclohexene-1-carboxylate synthase (570 aa).

The protein belongs to the TPP enzyme family. MenD subfamily. In terms of assembly, homodimer. Requires Mg(2+) as cofactor. Mn(2+) serves as cofactor. The cofactor is thiamine diphosphate.

It catalyses the reaction isochorismate + 2-oxoglutarate + H(+) = 5-enolpyruvoyl-6-hydroxy-2-succinyl-cyclohex-3-ene-1-carboxylate + CO2. It functions in the pathway quinol/quinone metabolism; 1,4-dihydroxy-2-naphthoate biosynthesis; 1,4-dihydroxy-2-naphthoate from chorismate: step 2/7. The protein operates within quinol/quinone metabolism; menaquinone biosynthesis. Functionally, catalyzes the thiamine diphosphate-dependent decarboxylation of 2-oxoglutarate and the subsequent addition of the resulting succinic semialdehyde-thiamine pyrophosphate anion to isochorismate to yield 2-succinyl-5-enolpyruvyl-6-hydroxy-3-cyclohexene-1-carboxylate (SEPHCHC). In Vibrio cholerae serotype O1 (strain ATCC 39541 / Classical Ogawa 395 / O395), this protein is 2-succinyl-5-enolpyruvyl-6-hydroxy-3-cyclohexene-1-carboxylate synthase.